A 425-amino-acid polypeptide reads, in one-letter code: 2-methylserine hydroxymethyltransferase (425 aa).

Residues Leu126 and 130–132 (GHL) contribute to the (6S)-5,6,7,8-tetrahydrofolate site. N6-(pyridoxal phosphate)lysine is present on Lys235.

The protein belongs to the SHMT family. In terms of assembly, homodimer. The cofactor is pyridoxal 5'-phosphate.

The protein resides in the cytoplasm. It carries out the reaction (6R)-5,10-methylene-5,6,7,8-tetrahydrofolate + D-alanine + H2O = 2-methylserine + (6S)-5,6,7,8-tetrahydrofolate. It functions in the pathway one-carbon metabolism; tetrahydrofolate interconversion. Its function is as follows. Catalyzes the reversible interconversion of alpha-methyl-L-serine to D-alanine with tetrahydrofolate (THF) serving as the one-carbon carrier. Cannot use alpha-methyl-D-serine, L-serine, D-serine or L-alanine. The protein is 2-methylserine hydroxymethyltransferase of Aminobacter sp.